The following is a 469-amino-acid chain: Protein HEAT STRESS TOLERANT DWD 1 (469 aa).

Over residues 1-15 the composition is skewed to basic residues; that stretch reads MGRNVKTKAKRKNKK. 2 disordered regions span residues 1–29 and 115–150; these read MGRN…SIPT and DVVP…KTPN. Over residues 124–143 the composition is skewed to acidic residues; it reads GEDEDEDDEDDSDSDDDDGD. WD repeat units lie at residues 157-197, 221-261, 267-307, 311-351, 358-398, and 425-464; these read AHHG…NALA, GHKD…WAVD, GHTA…SPAL, AHNA…GGDA, YHKH…DEEE, and QGQK…NTLP.

This sequence belongs to the WD repeat RBAP46/RBAP48/MSI1 family. Probable component of CULLIN4 (CUL4) RING ligase (CRL4) complexes. Interacts with DDB1A and DDB1B. Associates with HSP90-1.

It participates in protein modification; protein ubiquitination. Its function is as follows. Probable substrate receptor of CRL4 E3 ligase complexes acting as negative regulators of thermotolerance by disturbing the action of HSP90-1 and by preventing the expression of heat-inducible genes (e.g. HSP14.7, HSP21, At2g03020 and WRKY28). This chain is Protein HEAT STRESS TOLERANT DWD 1, found in Arabidopsis thaliana (Mouse-ear cress).